The primary structure comprises 146 residues: Anti-sigma F factor (146 aa).

The protein belongs to the anti-sigma-factor family.

It carries out the reaction L-seryl-[protein] + ATP = O-phospho-L-seryl-[protein] + ADP + H(+). The enzyme catalyses L-threonyl-[protein] + ATP = O-phospho-L-threonyl-[protein] + ADP + H(+). Its function is as follows. Binds to sigma F and blocks its ability to form an RNA polymerase holoenzyme (E-sigma F). Phosphorylates SpoIIAA on a serine residue. This phosphorylation may enable SpoIIAA to act as an anti-anti-sigma factor that counteracts SpoIIAB and thus releases sigma F from inhibition. This Shouchella clausii (strain KSM-K16) (Alkalihalobacillus clausii) protein is Anti-sigma F factor.